A 519-amino-acid chain; its full sequence is MNTKPQLTLLKVQASYRGDPTTLFHQLCGARPATLLLESAEINDKQNLQSLLVIDSALPITALGHTVSVQALTANGPALLPVLDEALPPEVRNQARPNGRELTFPAIDAVQDEDARLRSLSVFDALRTLLTLVDSPADEREAVMLGGLFAYDLVAGFENLPAVRQDQRCPDFCFYLAETLLVLDHQRGSARLQASVFSEQASEAQRLQHRLEQLQAELQQPPQPIPHQKLENMQLSCNQSDEEYGAVVSELQEAIRQGEIFQVVPSRRFSLPCPAPLGPYQTLKDNNPSPYMFFMQDDDFTLFGASPESALKYDAGNRQIEIYPIAGTRPRGRRADGSLDLDLDSRIELEMRTDHKELAEHLMLVDLARNDLARICQAGSRYVADLTKVDRYSFVMHLVSRVVGTLRADLDVLHAYQACMNMGTLSGAPKVRAMQLIAALRSTRRGSYGGRVGYFTAHRHLDTCIVIRSAYVEDGHRTVQAGAGVVQDSIRRREADETRNKARAVLRAIATAHHAKEVF.

Residues Ser39 and 290-292 each bind L-tryptophan; that span reads PYM. A chorismate-binding site is contributed by 327–328; the sequence is GT. Glu360 lines the Mg(2+) pocket. Chorismate-binding positions include Tyr448, Arg468, 482 to 484, and Gly484; that span reads GAG. Mg(2+) is bound at residue Glu497.

Belongs to the anthranilate synthase component I family. In terms of assembly, heterotetramer consisting of two non-identical subunits: a beta subunit (TrpG) and a large alpha subunit (TrpE). Requires Mg(2+) as cofactor.

The enzyme catalyses chorismate + L-glutamine = anthranilate + pyruvate + L-glutamate + H(+). Its pathway is amino-acid biosynthesis; L-tryptophan biosynthesis; L-tryptophan from chorismate: step 1/5. Its activity is regulated as follows. Feedback inhibited by tryptophan. Functionally, part of a heterotetrameric complex that catalyzes the two-step biosynthesis of anthranilate, an intermediate in the biosynthesis of L-tryptophan. In the first step, the glutamine-binding beta subunit (TrpG) of anthranilate synthase (AS) provides the glutamine amidotransferase activity which generates ammonia as a substrate that, along with chorismate, is used in the second step, catalyzed by the large alpha subunit of AS (TrpE) to produce anthranilate. In the absence of TrpG, TrpE can synthesize anthranilate directly from chorismate and high concentrations of ammonia. The protein is Anthranilate synthase component 1 (trpE) of Serratia marcescens.